The sequence spans 1124 residues: Probable leucine-rich repeat receptor-like protein kinase At2g33170 (1124 aa).

The signal sequence occupies residues 1–32 (MGWWIFEFKKESKSMFVGVLFLLTLLVWTSES). The Extracellular segment spans residues 33 to 752 (LNSDGQFLLE…LKAGSARRGR (720 aa)). Asn-72, Asn-96, and Asn-131 each carry an N-linked (GlcNAc...) asparagine glycan. LRR repeat units lie at residues 86–109 (VVTS…GGLV), 110–132 (NLVY…IGNC), 134–156 (KLEV…INKL), 158–180 (QLRS…IGDL), 182–205 (NLEE…GNLN), 206–228 (KLTT…IGKC), 230–252 (NLKL…IGML), 254–277 (KLQE…GNLT), 278–300 (SLET…IGNM), 302–325 (SLKK…GKLS), 326–348 (KVME…LSKI), 350–371 (ELRL…ELSK), 374–397 (NLAK…QNLT), 398–420 (SMRQ…LGLY), 422–444 (PLWV…ICQQ), 446–468 (NLIL…VLRC), 470–491 (SLLQ…ELCK), 494–516 (NLSA…IGTC), 518–540 (KLQR…ISKL), 542–564 (NLVT…IANC), 566–588 (MLQR…LGSL), 590–613 (QLEI…GNLT), 614–636 (HLTE…LGLL), 638–661 (SLQI…IGNL), 663–686 (LLMY…ENLS), and 687–709 (SLLG…QIFQ). The N-linked (GlcNAc...) asparagine glycan is linked to Asn-192. Asn-275 is a glycosylation site (N-linked (GlcNAc...) asparagine). Asn-314 carries N-linked (GlcNAc...) asparagine glycosylation. A glycan (N-linked (GlcNAc...) asparagine) is linked at Asn-395. Asn-494 carries an N-linked (GlcNAc...) asparagine glycan. Residue Asn-547 is glycosylated (N-linked (GlcNAc...) asparagine). N-linked (GlcNAc...) asparagine glycosylation occurs at Asn-611. 5 N-linked (GlcNAc...) asparagine glycosylation sites follow: Asn-644, Asn-684, Asn-692, Asn-697, and Asn-710. The helical transmembrane segment at 753-773 (IIIIVSSVIGGISLLLIAIVV) threads the bilayer. Residues 774–1124 (HFLRNPVEPT…CSDLPPPAPP (351 aa)) are Cytoplasmic-facing. A phosphothreonine mark is found at Thr-808 and Thr-816. The Protein kinase domain occupies 819-1100 (FHDSYIVGRG…TMREVVLMLI (282 aa)). ATP is bound by residues 825-833 (VGRGACGTV) and Lys-847. Phosphotyrosine is present on residues Tyr-901 and Tyr-939. Asp-952 serves as the catalytic Proton acceptor. A Phosphoserine modification is found at Ser-986. Tyr-994 and Tyr-1001 each carry phosphotyrosine. Thr-1002 carries the phosphothreonine modification.

This sequence belongs to the protein kinase superfamily. Ser/Thr protein kinase family.

It localises to the membrane. The enzyme catalyses L-seryl-[protein] + ATP = O-phospho-L-seryl-[protein] + ADP + H(+). The catalysed reaction is L-threonyl-[protein] + ATP = O-phospho-L-threonyl-[protein] + ADP + H(+). This Arabidopsis thaliana (Mouse-ear cress) protein is Probable leucine-rich repeat receptor-like protein kinase At2g33170.